Here is a 455-residue protein sequence, read N- to C-terminus: Adenylyltransferase and sulfurtransferase UBA4 (455 aa).

ATP contacts are provided by residues Gly93, Asp114, 121 to 125 (SNLHR), Lys138, and 182 to 183 (DH). Residues Cys224 and Cys227 each contribute to the Zn(2+) site. Cys241 (glycyl thioester intermediate; for adenylyltransferase activity) is an active-site residue. Positions 302 and 305 each coordinate Zn(2+). Residues 355–453 (QSREHTLIDV…WSEDIDAAFP (99 aa)) form the Rhodanese domain. The Cysteine persulfide intermediate; for sulfurtransferase activity role is filled by Cys413.

It in the N-terminal section; belongs to the HesA/MoeB/ThiF family. UBA4 subfamily. Zn(2+) serves as cofactor.

The protein resides in the cytoplasm. Its subcellular location is the cytosol. The protein operates within tRNA modification; 5-methoxycarbonylmethyl-2-thiouridine-tRNA biosynthesis. Its function is as follows. Plays a central role in 2-thiolation of mcm(5)S(2)U at tRNA wobble positions of cytosolic tRNA(Lys), tRNA(Glu) and tRNA(Gln). Acts by mediating the C-terminal thiocarboxylation of sulfur carrier URM1. Its N-terminus first activates URM1 as acyl-adenylate (-COAMP), then the persulfide sulfur on the catalytic cysteine is transferred to URM1 to form thiocarboxylation (-COSH) of its C-terminus. The reaction probably involves hydrogen sulfide that is generated from the persulfide intermediate and that acts as a nucleophile towards URM1. Subsequently, a transient disulfide bond is formed. Does not use thiosulfate as sulfur donor; NFS1 probably acting as a sulfur donor for thiocarboxylation reactions. Prior mcm(5) tRNA modification by the elongator complex is required for 2-thiolation. May also be involved in protein urmylation. In Lodderomyces elongisporus (strain ATCC 11503 / CBS 2605 / JCM 1781 / NBRC 1676 / NRRL YB-4239) (Yeast), this protein is Adenylyltransferase and sulfurtransferase UBA4.